Reading from the N-terminus, the 192-residue chain is Probable chorismate pyruvate-lyase (192 aa).

The substrate site is built by R85, L120, and E176.

This sequence belongs to the UbiC family.

The protein localises to the cytoplasm. It carries out the reaction chorismate = 4-hydroxybenzoate + pyruvate. The protein operates within cofactor biosynthesis; ubiquinone biosynthesis. Functionally, removes the pyruvyl group from chorismate, with concomitant aromatization of the ring, to provide 4-hydroxybenzoate (4HB) for the ubiquinone pathway. This Pseudoalteromonas atlantica (strain T6c / ATCC BAA-1087) protein is Probable chorismate pyruvate-lyase.